A 691-amino-acid chain; its full sequence is Germ cell nuclear acidic protein (691 aa).

Positions I22–V25 match the SUMO interaction motif 1 (SIM) motif. The tract at residues V25 to T488 is disordered. Low complexity predominate over residues S27 to S36. Positions C48 to S63 are enriched in polar residues. 3 consecutive short sequence motifs (SUMO interaction motif 1 (SIM)) follow at residues V76–I79, L97–I100, and I121–S124. A compositionally biased stretch (basic and acidic residues) spans E86 to L97. Over residues S124–E333 the composition is skewed to acidic residues. Residues G467–T488 show a composition bias toward basic residues. Positions V522–V677 constitute a SprT-like domain.

It belongs to the serine-aspartate repeat-containing protein (SDr) family. As to quaternary structure, interacts (via SIM domains) with SUMO2; this interaction allows the GCNA recruitment to DPCs sites. Interacts with TOP2A; this interaction allows the resolution of topoisomerase II (TOP2A) DNA-protein cross-links. In terms of tissue distribution, expressed in germ cells of the testis (at protein level). Detected in skeletal muscle, liver, kidney, pancreas, heart, lung and brain. Expressed throughout spermatogenesis, from spermatogonia to elongated spermatids, in normal adult testis (at protein level).

The protein resides in the nucleus. The protein localises to the PML body. It is found in the chromosome. May play a role in DNA-protein cross-links (DPCs) clearance through a SUMO-dependent recruitment to sites of DPCs, ensuring the genomic stability by protecting germ cells and early embryos from various sources of damage. Can resolve the topoisomerase II (TOP2A) DPCs. This Homo sapiens (Human) protein is Germ cell nuclear acidic protein.